Reading from the N-terminus, the 98-residue chain is NADH-ubiquinone oxidoreductase chain 4L (98 aa).

3 helical membrane-spanning segments follow: residues 1–21 (MSIT…GMFV), 29–49 (SLLC…IVSL), and 61–81 (VILL…LIMV).

It belongs to the complex I subunit 4L family. In terms of assembly, core subunit of respiratory chain NADH dehydrogenase (Complex I) which is composed of 45 different subunits.

The protein localises to the mitochondrion inner membrane. The catalysed reaction is a ubiquinone + NADH + 5 H(+)(in) = a ubiquinol + NAD(+) + 4 H(+)(out). Functionally, core subunit of the mitochondrial membrane respiratory chain NADH dehydrogenase (Complex I) which catalyzes electron transfer from NADH through the respiratory chain, using ubiquinone as an electron acceptor. Part of the enzyme membrane arm which is embedded in the lipid bilayer and involved in proton translocation. This chain is NADH-ubiquinone oxidoreductase chain 4L (MT-ND4L), found in Ochotona princeps (Southern American pika).